A 444-amino-acid chain; its full sequence is Xaa-Pro dipeptidase (444 aa).

Mn(2+)-binding residues include D247, D258, H340, E385, and E424.

It belongs to the peptidase M24B family. Bacterial-type prolidase subfamily. Requires Mn(2+) as cofactor.

It catalyses the reaction Xaa-L-Pro dipeptide + H2O = an L-alpha-amino acid + L-proline. In terms of biological role, splits dipeptides with a prolyl residue in the C-terminal position. The protein is Xaa-Pro dipeptidase of Photorhabdus laumondii subsp. laumondii (strain DSM 15139 / CIP 105565 / TT01) (Photorhabdus luminescens subsp. laumondii).